A 314-amino-acid polypeptide reads, in one-letter code: DNA-directed RNA polymerase subunit alpha (314 aa).

Residues 1 to 228 are alpha N-terminal domain (alpha-NTD); sequence MIEIEKPKIE…EHLNIFVGLT (228 aa). The alpha C-terminal domain (alpha-CTD) stretch occupies residues 245-314; that stretch reads KEKVLEMTIE…ELGLSLRKDD (70 aa).

Belongs to the RNA polymerase alpha chain family. As to quaternary structure, homodimer. The RNAP catalytic core consists of 2 alpha, 1 beta, 1 beta' and 1 omega subunit. When a sigma factor is associated with the core the holoenzyme is formed, which can initiate transcription.

The catalysed reaction is RNA(n) + a ribonucleoside 5'-triphosphate = RNA(n+1) + diphosphate. DNA-dependent RNA polymerase catalyzes the transcription of DNA into RNA using the four ribonucleoside triphosphates as substrates. This Geobacillus kaustophilus (strain HTA426) protein is DNA-directed RNA polymerase subunit alpha.